We begin with the raw amino-acid sequence, 558 residues long: Inositol-3-phosphate synthase (558 aa).

The tract at residues 1–34 (MSPTALDACDHHDSFSLPAQDQSKVHPSARRTPE) is disordered. Positions 99, 100, 101, 102, 174, 210, 211, 221, 224, 262, 263, 264, 265, 313, 314, 338, 341, 372, 373, 374, 387, 439, 440, 468, and 469 each coordinate NAD(+).

This sequence belongs to the myo-inositol 1-phosphate synthase family. In terms of assembly, homotetramer. It depends on NAD(+) as a cofactor.

It is found in the cytoplasm. It carries out the reaction D-glucose 6-phosphate = 1D-myo-inositol 3-phosphate. The protein operates within polyol metabolism; myo-inositol biosynthesis; myo-inositol from D-glucose 6-phosphate: step 1/2. Key enzyme in myo-inositol biosynthesis pathway that catalyzes the conversion of glucose 6-phosphate to 1-myo-inositol 1-phosphate in a NAD-dependent manner. Rate-limiting enzyme in the synthesis of all inositol-containing compounds. The protein is Inositol-3-phosphate synthase of Cryptococcus neoformans var. grubii serotype A (strain H99 / ATCC 208821 / CBS 10515 / FGSC 9487) (Filobasidiella neoformans var. grubii).